The sequence spans 457 residues: 11S globulin seed storage protein Ana o 2.0101 (457 aa).

The N-terminal stretch at 1 to 14 (LSVCFLILFHGCLA) is a signal peptide. The igE-binding stretch occupies residues 15-29 (SRQEWQQQDECQIDR). Intrachain disulfides connect Cys-25–Cys-58 and Cys-101–Cys-278. Conformational epitope; mouse monoclonal antibody (mAb) 2B5-binding regions lie at residues 29–37 (RLDALEPDN) and 31–48 (DALEPDNRVEYEAGTVEA). Positions 30–220 (LDALEPDNRV…AFQVDERLIK (191 aa)) constitute a Cupin type-1 1 domain. Binds goat polyclonal antibodies (pAbs) stretches follow at residues 32 to 45 (ALEPDNRVEYEAGT) and 55 to 86 (QFRCAGVALVRHTIQPNGLLLPQYSNAPQLIY). The mouse monoclonal antibody (mAb) 2B5-binding stretch occupies residues 34–57 (EPDNRVEYEAGTVEAWDPNHEQFR). Positions 41–55 (YEAGTVEAWDPNHEQ) are mouse monoclonal antibody (mAb) 4H9-binding. The interval 105-119 (YQAPQQGRQQGQSGR) is igE-binding. The tract at residues 215-239 (DERLIKQLKSEDNRGGIVKVKDDEL) is binds goat polyclonal antibodies (pAbs). The interval 233 to 252 (KVKDDELRVIRPSRSQSERG) is CD4(+) T cell-reactive epitope. The interval 243–270 (RPSRSQSERGSESEEESEDEKRRWGQRD) is disordered. The segment covering 261–270 (DEKRRWGQRD) has biased composition (basic and acidic residues). The linear epitope; mouse monoclonal antibody (mAb) 1F5-binding stretch occupies residues 265–289 (RWGQRDNGIEETICTMRLKENINDP). The NGXEET; peptidase recognition motif motif lies at 271–276 (NGIEET). Residues 284-433 (ENINDPARAD…AFQISREDAR (150 aa)) form the Cupin type-1 2 domain. 5 CD4(+) T cell-reactive epitope regions span residues 289–308 (PARADIYTPEVGRLTTLNSL), 297–316 (PEVGRLTTLNSLNLPILKWL), 321–340 (EKGVLYKNALVLPHWNLNSH), 329–348 (ALVLPHWNLNSHSIIYGCKG), and 377–396 (QNFAVVKRAREERFEWISFK). A binds goat polyclonal antibodies (pAbs), but buried in the 3D-structure model region spans residues 395–416 (FKTNDRAMTSPLAGRTSVLGGM).

This sequence belongs to the 11S seed storage protein (globulins) family. As to quaternary structure, homotrimer. Hexamer. Each subunit is composed of an acidic and a basic chain derived from a single precursor and linked by a disulfide bond. Post-translationally, proteolytically processed from a single precursor to produce an acidic and a basic chain that are linked by a disulfide bond. Not glycosylated. Expressed in seed (at protein level). Expressed in the juice of the cashew apple (at protein level).

In terms of biological role, seed storage protein. This Anacardium occidentale (Cashew) protein is 11S globulin seed storage protein Ana o 2.0101.